Consider the following 174-residue polypeptide: Ribosome maturation factor RimP (174 aa).

The protein belongs to the RimP family.

It is found in the cytoplasm. Its function is as follows. Required for maturation of 30S ribosomal subunits. The chain is Ribosome maturation factor RimP from Acinetobacter baylyi (strain ATCC 33305 / BD413 / ADP1).